A 1003-amino-acid polypeptide reads, in one-letter code: Glycine--tRNA ligase (1003 aa).

The interval 1 to 310 is glycine--tRNA ligase alpha subunit; that stretch reads MSSQPLTLQA…VTPKKIPTIC (310 aa). Residues 311–1003 are glycine--tRNA ligase beta subunit; sequence QPEDFLLEIG…CFGFYAWDVL (693 aa).

It belongs to the class-II aminoacyl-tRNA synthetase family.

The protein resides in the cytoplasm. It catalyses the reaction tRNA(Gly) + glycine + ATP = glycyl-tRNA(Gly) + AMP + diphosphate. The polypeptide is Glycine--tRNA ligase (glyQS) (Chlamydia trachomatis serovar L2 (strain ATCC VR-902B / DSM 19102 / 434/Bu)).